The following is a 166-amino-acid chain: MASADEKVVEEKASVISSLLDKAKGFFAEKLANIPTPEATVDDVDFKGVTRDGVDYHAKVSVKNPYSQSIPICQISYILKSATRTIASGTIPDPGSLVGSGTTVLDVPVKVAYSIAVSLMKDMCTDWDIDYQLDIGLTFDIPVVGDITIPVSTQGEIKLPSLRDFF.

This sequence belongs to the LEA type 2 family.

This Arabidopsis thaliana (Mouse-ear cress) protein is Desiccation-related protein At2g46140.